We begin with the raw amino-acid sequence, 402 residues long: Zinc finger protein 587B (402 aa).

One can recognise a KRAB domain in the interval 15 to 91; sequence VTFEDVAVKF…PVTGVSPKKA (77 aa). A C2H2-type 1 zinc finger spans residues 92–114; that stretch reads HPCEMCGPILGDILHVADHQGTH. Residues 120–142 form a C2H2-type 2; degenerate zinc finger; it reads HRCEAWGNKLYDSGNFHQHQNEH. Glycyl lysine isopeptide (Lys-Gly) (interchain with G-Cter in SUMO2) cross-links involve residues K177, K200, and K253. 5 consecutive C2H2-type zinc fingers follow at residues 242 to 264, 270 to 292, 298 to 320, 326 to 348, and 354 to 383; these read YVCC…QRVH, YECG…QQFH, YGCE…QKVH, YECG…QRIH, and YKCG…WVDH. K366 participates in a covalent cross-link: Glycyl lysine isopeptide (Lys-Gly) (interchain with G-Cter in SUMO2).

Belongs to the krueppel C2H2-type zinc-finger protein family.

Its subcellular location is the nucleus. Functionally, may be involved in transcriptional regulation. The sequence is that of Zinc finger protein 587B (ZNF587B) from Homo sapiens (Human).